The chain runs to 298 residues: Tyrosine recombinase XerC (298 aa).

Residues 2-88 form the Core-binding (CB) domain; that stretch reads TDLHTDVERY…ALRSFFDWLV (87 aa). One can recognise a Tyr recombinase domain in the interval 109 to 288; sequence HLPKNIDVDD…DFQHLASVYD (180 aa). Catalysis depends on residues Arg148, Lys172, His240, Arg243, and His266. Residue Tyr275 is the O-(3'-phospho-DNA)-tyrosine intermediate of the active site.

This sequence belongs to the 'phage' integrase family. XerC subfamily. As to quaternary structure, forms a cyclic heterotetrameric complex composed of two molecules of XerC and two molecules of XerD, in which XerC interacts with XerD via its C-terminal region, XerD interacts with XerC via its C-terminal region and so on.

The protein localises to the cytoplasm. With respect to regulation, ftsK may regulate the catalytic switch between XerC and XerD in the heterotetrameric complex during the two steps of the recombination process. Its function is as follows. Site-specific tyrosine recombinase, which acts by catalyzing the cutting and rejoining of the recombining DNA molecules. Binds cooperatively to specific DNA consensus sequences that are separated from XerD binding sites by a short central region, forming the heterotetrameric XerC-XerD complex that recombines DNA substrates. The complex is essential to convert dimers of the bacterial chromosome into monomers to permit their segregation at cell division. It also contributes to the segregational stability of plasmids. In the complex XerC specifically exchanges the top DNA strands. This Escherichia coli O139:H28 (strain E24377A / ETEC) protein is Tyrosine recombinase XerC.